A 287-amino-acid chain; its full sequence is Diaminopimelate epimerase (287 aa).

Residues Asn-13, Gln-46, and Asn-66 each contribute to the substrate site. Cys-75 serves as the catalytic Proton donor. Substrate-binding positions include 76-77 (GN), Asn-166, Asn-199, and 217-218 (ER). The active-site Proton acceptor is the Cys-226. Residue 227–228 (GT) coordinates substrate.

This sequence belongs to the diaminopimelate epimerase family. In terms of assembly, homodimer.

The protein resides in the cytoplasm. The catalysed reaction is (2S,6S)-2,6-diaminopimelate = meso-2,6-diaminopimelate. It functions in the pathway amino-acid biosynthesis; L-lysine biosynthesis via DAP pathway; DL-2,6-diaminopimelate from LL-2,6-diaminopimelate: step 1/1. Its function is as follows. Catalyzes the stereoinversion of LL-2,6-diaminopimelate (L,L-DAP) to meso-diaminopimelate (meso-DAP), a precursor of L-lysine and an essential component of the bacterial peptidoglycan. The polypeptide is Diaminopimelate epimerase (Paraburkholderia xenovorans (strain LB400)).